The chain runs to 79 residues: Cytochrome b (79 aa).

A run of 3 helical transmembrane segments spans residues 1–7 (TALFLAM), 31–52 (WLIR…YLHI), and 67–79 (WNIG…LTMM). 2 residues coordinate heme b: histidine 37 and histidine 51.

This sequence belongs to the cytochrome b family. The cytochrome bc1 complex contains 3 respiratory subunits (MT-CYB, CYC1 and UQCRFS1), 2 core proteins (UQCRC1 and UQCRC2) and probably 6 low-molecular weight proteins. It depends on heme b as a cofactor.

The protein localises to the mitochondrion inner membrane. Component of the ubiquinol-cytochrome c reductase complex (complex III or cytochrome b-c1 complex) that is part of the mitochondrial respiratory chain. The b-c1 complex mediates electron transfer from ubiquinol to cytochrome c. Contributes to the generation of a proton gradient across the mitochondrial membrane that is then used for ATP synthesis. This chain is Cytochrome b (mt-cyb), found in Julidochromis regani (Convict julie).